Consider the following 300-residue polypeptide: uncharacterized protein (300 aa).

Residues 10–67 form the HTH lysR-type domain; sequence FDLNLLVIFECIYQHLSISKAAESLYITPSAVSQSLQRLRAQFNDPLFIRSGKGIAPT. The segment at residues 27–46 is a DNA-binding region (H-T-H motif); sequence ISKAAESLYITPSAVSQSLQ.

It belongs to the LysR transcriptional regulatory family.

This is an uncharacterized protein from Escherichia coli (strain K12).